Consider the following 406-residue polypeptide: Acetylornithine/succinyldiaminopimelate aminotransferase (406 aa).

Residues 108–109 and phenylalanine 141 each bind pyridoxal 5'-phosphate; that span reads GT. Arginine 144 lines the N(2)-acetyl-L-ornithine pocket. 226–229 is a pyridoxal 5'-phosphate binding site; the sequence is DEVQ. Lysine 255 is subject to N6-(pyridoxal phosphate)lysine. Position 283 (serine 283) interacts with N(2)-acetyl-L-ornithine. A pyridoxal 5'-phosphate-binding site is contributed by threonine 284.

It belongs to the class-III pyridoxal-phosphate-dependent aminotransferase family. ArgD subfamily. As to quaternary structure, homodimer. Pyridoxal 5'-phosphate serves as cofactor.

Its subcellular location is the cytoplasm. The catalysed reaction is N(2)-acetyl-L-ornithine + 2-oxoglutarate = N-acetyl-L-glutamate 5-semialdehyde + L-glutamate. The enzyme catalyses N-succinyl-(2S,6S)-2,6-diaminopimelate + 2-oxoglutarate = (S)-2-succinylamino-6-oxoheptanedioate + L-glutamate. The protein operates within amino-acid biosynthesis; L-arginine biosynthesis; N(2)-acetyl-L-ornithine from L-glutamate: step 4/4. It functions in the pathway amino-acid biosynthesis; L-lysine biosynthesis via DAP pathway; LL-2,6-diaminopimelate from (S)-tetrahydrodipicolinate (succinylase route): step 2/3. Involved in both the arginine and lysine biosynthetic pathways. The polypeptide is Acetylornithine/succinyldiaminopimelate aminotransferase (Escherichia coli O157:H7).